Here is a 246-residue protein sequence, read N- to C-terminus: Probable fimbrial chaperone YadV (246 aa).

Positions 1–25 are cleaved as a signal peptide; the sequence is MFFNTKHTTALCFVTCMAFSSSSIA.

It belongs to the periplasmic pilus chaperone family.

The protein localises to the periplasm. Part of the yadCKLM-htrE-yadVN fimbrial operon. Could contribute to adhesion to various surfaces in specific environmental niches. This Escherichia coli (strain K12) protein is Probable fimbrial chaperone YadV (yadV).